The sequence spans 125 residues: Small ribosomal subunit protein uS13 (125 aa).

The protein belongs to the universal ribosomal protein uS13 family. In terms of assembly, part of the 30S ribosomal subunit. Forms a loose heterodimer with protein S19. Forms two bridges to the 50S subunit in the 70S ribosome.

Functionally, located at the top of the head of the 30S subunit, it contacts several helices of the 16S rRNA. In the 70S ribosome it contacts the 23S rRNA (bridge B1a) and protein L5 of the 50S subunit (bridge B1b), connecting the 2 subunits; these bridges are implicated in subunit movement. Contacts the tRNAs in the A and P-sites. This Rickettsia africae (strain ESF-5) protein is Small ribosomal subunit protein uS13.